Here is a 679-residue protein sequence, read N- to C-terminus: Penicillin-binding protein PbpB (679 aa).

Residues 1 to 74 are disordered; the sequence is MSRAAPRRAS…STRARRTRQV (74 aa). Over 1-90 the chain is Cytoplasmic; the sequence is MSRAAPRRAS…GASFVFRHRT (90 aa). Positions 42–54 are enriched in polar residues; sequence ARQAQEATKSRPA. Residues 91-111 form a helical membrane-spanning segment; the sequence is GNAVILVLMLVAATQLFFLQV. At 112–679 the chain is on the extracellular side; the sequence is SHAAGLRAQA…PGPPLVLQAT (568 aa). Ser386 (acyl-ester intermediate) is an active-site residue.

The protein belongs to the transpeptidase family. As to quaternary structure, interacts with Wag31. Cleaved by Rip1 in response to oxidative stress (H(2)O(2)), prevented by Wag31. Cleavage probably occurs near residues 102-103.

The protein resides in the cell membrane. Its pathway is cell wall biogenesis; peptidoglycan biosynthesis. Synthesis of cross-linked peptidoglycan from the lipid intermediates. This is Penicillin-binding protein PbpB (pbpB) from Mycobacterium tuberculosis (strain ATCC 25618 / H37Rv).